The chain runs to 346 residues: PhoH-like protein (346 aa).

142–149 (GPAGTGKT) contributes to the ATP binding site.

Belongs to the PhoH family.

The protein resides in the cytoplasm. The polypeptide is PhoH-like protein (ybeZ) (Escherichia coli O157:H7).